A 341-amino-acid polypeptide reads, in one-letter code: Putative [LysW]-lysine/[LysW]-ornithine hydrolase (341 aa).

Histidine 62 is a binding site for Zn(2+). Residue aspartate 64 is part of the active site. Zn(2+) is bound at residue aspartate 86. The active-site Proton acceptor is the glutamate 115. The Zn(2+) site is built by glutamate 116, glutamate 140, and histidine 309.

This sequence belongs to the peptidase M20A family. LysK subfamily. The cofactor is Zn(2+). It depends on Co(2+) as a cofactor.

The protein localises to the cytoplasm. It carries out the reaction [amino-group carrier protein]-C-terminal-gamma-(L-lysyl)-L-glutamate + H2O = [amino-group carrier protein]-C-terminal-L-glutamate + L-lysine. The catalysed reaction is [amino-group carrier protein]-C-terminal-gamma-(L-ornithyl)-L-glutamate + H2O = [amino-group carrier protein]-C-terminal-L-glutamate + L-ornithine. It participates in amino-acid biosynthesis; L-lysine biosynthesis via AAA pathway; L-lysine from L-alpha-aminoadipate (Thermus route): step 5/5. It functions in the pathway amino-acid biosynthesis; L-arginine biosynthesis. In terms of biological role, catalyzes the release of L-lysine from [LysW]-gamma-L-lysine and the release of L-ornithine from [LysW]-L-ornithine. In Pyrobaculum aerophilum (strain ATCC 51768 / DSM 7523 / JCM 9630 / CIP 104966 / NBRC 100827 / IM2), this protein is Putative [LysW]-lysine/[LysW]-ornithine hydrolase.